The following is a 404-amino-acid chain: Protein L-Myc-1b (404 aa).

Disordered regions lie at residues 175–195 (KKQVSSGSESRTDSSDDEEID) and 238–331 (QQHN…FLER). A compositionally biased stretch (polar residues) spans 287-315 (VPAQSPTVSASPTHTSYHLKSQPSSPQSS). The bHLH domain occupies 321-373 (DKRKTHNFLERKRRNDLRSRFLALRDEIPGLVDCPKTPKVVILTKATEYLRTL). Positions 373–401 (LHVSDRQKAQEKKQLKSKQQQLLRRLAEL) are leucine-zipper.

As to quaternary structure, efficient DNA binding requires dimerization with another bHLH protein. Binds DNA as a heterodimer with max.

It is found in the nucleus. The protein is Protein L-Myc-1b of Danio rerio (Zebrafish).